Consider the following 527-residue polypeptide: Probable bifunctional methylthioribulose-1-phosphate dehydratase/enolase-phosphatase E1 (527 aa).

Positions 1–244 are methylthioribulose-1-phosphate dehydratase; it reads MAAAAAPAVA…AIKLHQLGLD (244 aa). Cysteine 116 contributes to the substrate binding site. Histidine 134 and histidine 136 together coordinate Zn(2+). The Proton donor/acceptor; for methylthioribulose-1-phosphate dehydratase activity role is filled by glutamate 159. Zn(2+) is bound at residue histidine 209. The interval 288 to 527 is enolase-phosphatase E1; it reads IVLDIEGTTT…FKTINSLSEI (240 aa). Mg(2+)-binding residues include aspartate 291 and glutamate 293. Residues 426–427 and lysine 460 contribute to the substrate site; that span reads SS. Residue aspartate 486 coordinates Mg(2+).

In the N-terminal section; belongs to the aldolase class II family. MtnB subfamily. It in the C-terminal section; belongs to the HAD-like hydrolase superfamily. MasA/MtnC family. Zn(2+) serves as cofactor. The cofactor is Mg(2+).

It carries out the reaction 5-(methylsulfanyl)-D-ribulose 1-phosphate = 5-methylsulfanyl-2,3-dioxopentyl phosphate + H2O. The catalysed reaction is 5-methylsulfanyl-2,3-dioxopentyl phosphate + H2O = 1,2-dihydroxy-5-(methylsulfanyl)pent-1-en-3-one + phosphate. It functions in the pathway amino-acid biosynthesis; L-methionine biosynthesis via salvage pathway; L-methionine from S-methyl-5-thio-alpha-D-ribose 1-phosphate: step 2/6. The protein operates within amino-acid biosynthesis; L-methionine biosynthesis via salvage pathway; L-methionine from S-methyl-5-thio-alpha-D-ribose 1-phosphate: step 3/6. It participates in amino-acid biosynthesis; L-methionine biosynthesis via salvage pathway; L-methionine from S-methyl-5-thio-alpha-D-ribose 1-phosphate: step 4/6. This chain is Probable bifunctional methylthioribulose-1-phosphate dehydratase/enolase-phosphatase E1, found in Ricinus communis (Castor bean).